We begin with the raw amino-acid sequence, 129 residues long: Ergosterol biosynthetic protein 28 (129 aa).

A run of 4 helical transmembrane segments spans residues 4–24 (LGYWLMVVGSLRLASVWFGFF), 46–66 (TFGVWTLLTCTLCFLCAFNLE), 71–91 (YLATFLSFIYALGHFLTEYLF), and 96–116 (TIANLSTVGFFAGTSIVWMLL).

Belongs to the ERG28 family.

It localises to the endoplasmic reticulum membrane. In Arabidopsis thaliana (Mouse-ear cress), this protein is Ergosterol biosynthetic protein 28.